The primary structure comprises 273 residues: Dermonecrotic toxin LdSicTox-alphaIB1avi (273 aa).

Residue His-5 is part of the active site. Residues Glu-25 and Asp-27 each coordinate Mg(2+). Residue His-41 is the Nucleophile of the active site. Intrachain disulfides connect Cys-45-Cys-51 and Cys-47-Cys-190. Asp-85 lines the Mg(2+) pocket. N-linked (GlcNAc...) asparagine glycosylation is present at Asn-250.

Belongs to the arthropod phospholipase D family. Class II subfamily. It depends on Mg(2+) as a cofactor. Expressed by the venom gland.

It is found in the secreted. The catalysed reaction is an N-(acyl)-sphingosylphosphocholine = an N-(acyl)-sphingosyl-1,3-cyclic phosphate + choline. It carries out the reaction an N-(acyl)-sphingosylphosphoethanolamine = an N-(acyl)-sphingosyl-1,3-cyclic phosphate + ethanolamine. It catalyses the reaction a 1-acyl-sn-glycero-3-phosphocholine = a 1-acyl-sn-glycero-2,3-cyclic phosphate + choline. The enzyme catalyses a 1-acyl-sn-glycero-3-phosphoethanolamine = a 1-acyl-sn-glycero-2,3-cyclic phosphate + ethanolamine. Functionally, dermonecrotic toxins cleave the phosphodiester linkage between the phosphate and headgroup of certain phospholipids (sphingolipid and lysolipid substrates), forming an alcohol (often choline) and a cyclic phosphate. This toxin acts on sphingomyelin (SM). It may also act on ceramide phosphoethanolamine (CPE), lysophosphatidylcholine (LPC) and lysophosphatidylethanolamine (LPE), but not on lysophosphatidylserine (LPS), and lysophosphatidylglycerol (LPG). It acts by transphosphatidylation, releasing exclusively cyclic phosphate products as second products. Induces dermonecrosis, hemolysis, increased vascular permeability, edema, inflammatory response, and platelet aggregation. The protein is Dermonecrotic toxin LdSicTox-alphaIB1avi of Loxosceles deserta (Desert recluse spider).